Reading from the N-terminus, the 288-residue chain is Dichloromethane dehalogenase (288 aa).

In terms of domain architecture, GST N-terminal spans 12–94 (KTLRLLYHPA…YVNEKFDGAG (83 aa)). One can recognise a GST C-terminal domain in the interval 100–252 (GTQERAQINQ…ASMFKRKTAV (153 aa)).

It belongs to the GST superfamily. Homohexamer.

Its subcellular location is the cytoplasm. It catalyses the reaction dichloromethane + H2O = formaldehyde + 2 chloride + 2 H(+). It functions in the pathway xenobiotic degradation; dichloromethane degradation. The chain is Dichloromethane dehalogenase (dcmA) from Methylorubrum extorquens (strain DSM 6343 / CIP 106787 / DM4) (Methylobacterium extorquens).